The chain runs to 215 residues: Ribose-5-phosphate isomerase A (215 aa).

Substrate is bound by residues 26–29, 79–82, and 92–95; these read TGST, DGAD, and KGGG. The active-site Proton acceptor is the glutamate 101. Lysine 119 is a binding site for substrate.

It belongs to the ribose 5-phosphate isomerase family. In terms of assembly, homodimer.

It catalyses the reaction aldehydo-D-ribose 5-phosphate = D-ribulose 5-phosphate. Its pathway is carbohydrate degradation; pentose phosphate pathway; D-ribose 5-phosphate from D-ribulose 5-phosphate (non-oxidative stage): step 1/1. Catalyzes the reversible conversion of ribose-5-phosphate to ribulose 5-phosphate. The polypeptide is Ribose-5-phosphate isomerase A (Stenotrophomonas maltophilia (strain K279a)).